Consider the following 211-residue polypeptide: Urease accessory protein UreE (211 aa).

The disordered stretch occupies residues 134–211 (FDPEGGAYAP…DHHGHGHEHK (78 aa)). Over residues 147-202 (PSHDHAGHDHAHDSHAHHDHDHGKHAQHDHGKHDHAHHDHAAHDDHHVHDEHCGHD) the composition is skewed to basic and acidic residues.

Belongs to the UreE family.

It is found in the cytoplasm. Functionally, involved in urease metallocenter assembly. Binds nickel. Probably functions as a nickel donor during metallocenter assembly. The sequence is that of Urease accessory protein UreE from Rhodopseudomonas palustris (strain BisB18).